Consider the following 741-residue polypeptide: Copper-transporting ATPase (741 aa).

Residues 1–67 (MKESFYIEGM…LIEKLGYSPK (67 aa)) form the HMA domain. Residues 1-83 (MKESFYIEGM…KKEFFSPNVK (83 aa)) lie on the Cytoplasmic side of the membrane. Cu cation-binding residues include C12 and C15. The helical transmembrane segment at 84–104 (LALAVIFTLFVVYLSMGAMLS) threads the bilayer. The Extracellular portion of the chain corresponds to 105 to 124 (PSLLPESLLTINNHSNFLNA). A helical transmembrane segment spans residues 125-144 (CLQLIGTLIVMHLGRDFYIQ). The Cytoplasmic segment spans residues 145–151 (GFKALWH). The helical transmembrane segment at 152-172 (RQPNMSSLIAIGTSAALISSL) threads the bilayer. The Extracellular segment spans residues 173–190 (WQLYFVYTSQWSYGHYYF). The chain crosses the membrane as a helical span at residues 191 to 211 (ESVCVILMFVMVGKRIENVSK). The Cytoplasmic portion of the chain corresponds to 212–339 (DKALDAMQAL…KAEISRLADK (128 aa)). The chain crosses the membrane as a helical span at residues 340–362 (VSSVFVPSVIAIAILAFVVWLII). Residues 363-375 (APKPDFWWNFGIA) lie on the Extracellular side of the membrane. A helical membrane pass occupies residues 376–393 (LEVFVSVLVISCPCALGL). Residues 394–681 (ATPMSILVAN…KLSQATIKNI (288 aa)) lie on the Cytoplasmic side of the membrane. Catalysis depends on D431, which acts as the 4-aspartylphosphate intermediate. 2 residues coordinate Mg(2+): D627 and D631. Residues 682 to 701 (KENLFWAFCYNSVFIPLACG) form a helical membrane-spanning segment. The Extracellular portion of the chain corresponds to 702 to 712 (VLYKANIMLSP). Residues 713-731 (AIAGLAMSLSSVSVVLNSQ) traverse the membrane as a helical segment. Residues 732-741 (RLRNFKIKDH) lie on the Cytoplasmic side of the membrane.

This sequence belongs to the cation transport ATPase (P-type) (TC 3.A.3) family. Type IB subfamily.

The protein resides in the cell membrane. It carries out the reaction Cu(2+)(in) + ATP + H2O = Cu(2+)(out) + ADP + phosphate + H(+). Probably involved in copper export. The polypeptide is Copper-transporting ATPase (copA) (Helicobacter pylori (Campylobacter pylori)).